The primary structure comprises 715 residues: MIYQGETLTVSYLEDGIAELRFDAPGSVNKLDRATLLSLSEAIAALQQERELKGLILTSGKDAFIVGADITEFLELFDLPQADLLGWLKKANDIFSAIEDLPVPTLSAIKGHALGGGCETILSTDFRLADTSAKIGLPETKLGIMPGFGGTVRLPRVIGADNALEWITTGKDYRADDALKVGAIDAVVAPDALQSAAVQMIKDAVKGKLDWQGRRAAKKAPLRLSKLEAMMSFTTAAGMVAAVAGKHYPAPMTAVKTVEAAAGMSRDEALAVEAQGFIKLAKTDVAKALVGIFLNDQHIKALAKKAAKQAAKATSHAAVLGAGIMGGGIAYQSASKGIPAVMKDINEKALALGMGEATKLLNGQLEKGRIDGIKMGQVLSAITPTLSYDNVKHVDVVVEAVVENPKVKAAVLGEVEGIIGEDAVLASNTSTIPISLLAKELKRPQNFCGMHFFNPVHRMPLVEIIRGEQTSDETINRVVAYAAAMGKSPVVVNDCPGFFVNRVLFPYFFGFNKLVADGADFAAVDKVMEKEFGWPMGPAYLLDVVGIDTGHHAGDVMAQGFPARMSKEGRTAIDVMYEVNRFGQKNGKGFYAYEQDKKGKPKKVADAASYELLAPIAKPKQDFDKDAIIARMMIPMINEVVLCLEEGIVATPAEADIALVYGLGFPPFRGGVFRYLDTIGLDRYVAMADQYADLGPLYRVSDKLREMAAQGKTFY.

The segment at 1-189 is enoyl-CoA hydratase/isomerase; that stretch reads MIYQGETLTV…KVGAIDAVVA (189 aa). D296 serves as a coordination point for substrate. The tract at residues 311-715 is 3-hydroxyacyl-CoA dehydrogenase; it reads AKATSHAAVL…EMAAQGKTFY (405 aa). NAD(+) is bound by residues M325, D344, 401–403, K408, and S430; that span reads VVE. H451 acts as the For 3-hydroxyacyl-CoA dehydrogenase activity in catalysis. NAD(+) is bound at residue N454. Substrate is bound by residues N501 and Y661.

In the N-terminal section; belongs to the enoyl-CoA hydratase/isomerase family. It in the C-terminal section; belongs to the 3-hydroxyacyl-CoA dehydrogenase family. As to quaternary structure, heterotetramer of two alpha chains (FadB) and two beta chains (FadA).

It carries out the reaction a (3S)-3-hydroxyacyl-CoA + NAD(+) = a 3-oxoacyl-CoA + NADH + H(+). It catalyses the reaction a (3S)-3-hydroxyacyl-CoA = a (2E)-enoyl-CoA + H2O. The enzyme catalyses a 4-saturated-(3S)-3-hydroxyacyl-CoA = a (3E)-enoyl-CoA + H2O. The catalysed reaction is (3S)-3-hydroxybutanoyl-CoA = (3R)-3-hydroxybutanoyl-CoA. It carries out the reaction a (3Z)-enoyl-CoA = a 4-saturated (2E)-enoyl-CoA. It catalyses the reaction a (3E)-enoyl-CoA = a 4-saturated (2E)-enoyl-CoA. Its pathway is lipid metabolism; fatty acid beta-oxidation. Involved in the aerobic and anaerobic degradation of long-chain fatty acids via beta-oxidation cycle. Catalyzes the formation of 3-oxoacyl-CoA from enoyl-CoA via L-3-hydroxyacyl-CoA. It can also use D-3-hydroxyacyl-CoA and cis-3-enoyl-CoA as substrate. The sequence is that of Fatty acid oxidation complex subunit alpha from Aeromonas hydrophila subsp. hydrophila (strain ATCC 7966 / DSM 30187 / BCRC 13018 / CCUG 14551 / JCM 1027 / KCTC 2358 / NCIMB 9240 / NCTC 8049).